Here is a 277-residue protein sequence, read N- to C-terminus: MTTTVAVVGATGRMGQLISQIVEASDEFELVASLDSKGELSDMLGADIAVDVTLPAVSQGVVEYAVAHGMNVLVGTSGWTGERITELERRITGNLAVGVVIIPNFSVGSVLATSFAQMAARFYDSIEIVEAHGASKIDSPSGTAVRTAELMSQARGSRGPVQAPHTDQRARGQQVASIPVHSLRMQGVVAKQDVVFGGNGEVLTISHDTLAPSAYEAGILLALRATRTARGVVVGLDRLIDMDGSRERATQTAPTGAASGPVDDGGPSGQAATVTSA.

Residue 9–14 (GATGRM) coordinates NAD(+). K37 provides a ligand contact to NADP(+). Position 75–77 (75–77 (GTS)) interacts with NAD(+). H132 functions as the Proton donor/acceptor in the catalytic mechanism. The active-site Proton donor is the K136. A (S)-2,3,4,5-tetrahydrodipicolinate-binding site is contributed by 142–143 (GT). The disordered stretch occupies residues 245–277 (SRERATQTAPTGAASGPVDDGGPSGQAATVTSA).

Belongs to the DapB family.

It is found in the cytoplasm. It carries out the reaction (S)-2,3,4,5-tetrahydrodipicolinate + NAD(+) + H2O = (2S,4S)-4-hydroxy-2,3,4,5-tetrahydrodipicolinate + NADH + H(+). It catalyses the reaction (S)-2,3,4,5-tetrahydrodipicolinate + NADP(+) + H2O = (2S,4S)-4-hydroxy-2,3,4,5-tetrahydrodipicolinate + NADPH + H(+). It functions in the pathway amino-acid biosynthesis; L-lysine biosynthesis via DAP pathway; (S)-tetrahydrodipicolinate from L-aspartate: step 4/4. Catalyzes the conversion of 4-hydroxy-tetrahydrodipicolinate (HTPA) to tetrahydrodipicolinate. The protein is 4-hydroxy-tetrahydrodipicolinate reductase of Clavibacter sepedonicus (Clavibacter michiganensis subsp. sepedonicus).